A 92-amino-acid chain; its full sequence is MSSAFDWRAKAACRDKDPELFFPVGNTGAAYQQIEEAKAVCRTCKVIDACLKCALDTNQDYGVWGGLSEDERRALKRRAMRARRSQAMQMQI.

In terms of domain architecture, 4Fe-4S Wbl-type spans 12–74 (ACRDKDPELF…GGLSEDERRA (63 aa)). Residues Cys-13, Cys-41, Cys-44, and Cys-50 each coordinate [4Fe-4S] cluster.

This sequence belongs to the WhiB family. [4Fe-4S] cluster is required as a cofactor. Post-translationally, the Fe-S cluster can be nitrosylated by nitric oxide (NO). Upon Fe-S cluster removal intramolecular disulfide bonds are formed.

The protein resides in the cytoplasm. Functionally, acts as a transcriptional regulator. Probably redox-responsive. The apo- but not holo-form probably binds DNA. The polypeptide is Transcriptional regulator WhiB1 (whiB1) (Bifidobacterium longum (strain NCC 2705)).